Here is a 461-residue protein sequence, read N- to C-terminus: V-type ATP synthase beta chain (461 aa).

Belongs to the ATPase alpha/beta chains family.

Produces ATP from ADP in the presence of a proton gradient across the membrane. The V-type beta chain is a regulatory subunit. In Clostridium botulinum (strain Langeland / NCTC 10281 / Type F), this protein is V-type ATP synthase beta chain.